The primary structure comprises 487 residues: MPTDERLSDDQLQRIANDLRDNWHTGREVDFEEAIAFHESLPASKQFAQVLESADQPLLQPRAGVPCLEEQIDLLRYLQDEGGADLLPTTIDSYTRDNEYEKAEEGLAASRGSDENELNGFPAVNHGVEDCRRLIRALDAPVEVRHGTPDARLLAMVTLAGGFQSFEGGPISYNIPYTKRHDLATTIEHWQFVDRLCGAYTERGVTINREPFGPLTGTLVPPSIAIAVMLVEGELAATQGVRSLTLGYGQVGNLVQDVAALRALRKLGNEYLRDEVTVTTVFHEWMGGFPPDEARANGVISLGGATAAVAQPDKVITKSAQEFQGVPTKEANAAGLRTTRQLIDMMIEQDIDLGGIDEEQALIERETRALMDAIYEAGDGDVAQGVINAFDSGALDVPFAPSDAAKGAVLPARDDDGRVRIFEFADLALPDDIKEIHAARLGERAETEGRDQSFRMVADDVDAISDGKLIGRPGGDNSPAGGASDAD.

Position 62 (arginine 62) interacts with L-glutamate. Glycine 64 is an adenosylcob(III)alamin binding site. Arginine 96 serves as a coordination point for L-glutamate. Asparagine 119 lines the adenosylcob(III)alamin pocket. Residues 145–146 (RH), glutamate 167, and tyrosine 173 contribute to the L-glutamate site. Proline 176 provides a ligand contact to adenosylcob(III)alamin. Tyrosine 177 is an L-glutamate binding site. Adenosylcob(III)alamin-binding residues include phenylalanine 289, lysine 318, and glutamate 322. Residues 465 to 487 (SDGKLIGRPGGDNSPAGGASDAD) form a disordered region.

The protein belongs to the methylaspartate mutase GlmE subunit family. Heterotetramer composed of 2 epsilon subunits (GlmE) and 2 sigma subunits (GlmS). GlmE exists as a homodimer and GlmS as a monomer. It depends on adenosylcob(III)alamin as a cofactor.

It carries out the reaction (2S,3S)-3-methyl-L-aspartate = L-glutamate. The protein operates within amino-acid degradation; L-glutamate degradation via mesaconate pathway; acetate and pyruvate from L-glutamate: step 1/4. Its function is as follows. Catalyzes the carbon skeleton rearrangement of L-glutamate to L-threo-3-methylaspartate ((2S,3S)-3-methylaspartate). The polypeptide is Glutamate mutase epsilon subunit (Haloarcula marismortui (strain ATCC 43049 / DSM 3752 / JCM 8966 / VKM B-1809) (Halobacterium marismortui)).